A 317-amino-acid polypeptide reads, in one-letter code: MDKQTYWEIIIHPSDFLDQFTDFIIQKTSCAIEFFDILPTPSHFAIIYDDASWQSVLGFDILKAKKSKQPTQIVSRIASNEINIQDFLESLQHFALMLAQNTQDSVGFCYHIEEKFNYDWIKAYQDSIEPVQCGRFYIRPSWEQEVKESYDEIIINPAFAFGSGHHASTAMCLEFLSEMNIQGKTLLDVGCGSGILSIASCKLGAQVYACDTDENAIKECNKNILLNGVMLNALWQGSIADSPMGAPQKYDVIVANIVAFIVKVLHNDFRTKLAKNGVLILSGILDEYKFDIIKAFNDFDMLDTCCKDGWVALKLTL.

S-adenosyl-L-methionine contacts are provided by threonine 169, glycine 190, aspartate 211, and asparagine 256.

Belongs to the methyltransferase superfamily. PrmA family.

It is found in the cytoplasm. It catalyses the reaction L-lysyl-[protein] + 3 S-adenosyl-L-methionine = N(6),N(6),N(6)-trimethyl-L-lysyl-[protein] + 3 S-adenosyl-L-homocysteine + 3 H(+). Methylates ribosomal protein L11. The protein is Ribosomal protein L11 methyltransferase of Helicobacter hepaticus (strain ATCC 51449 / 3B1).